Consider the following 223-residue polypeptide: MGRGKIEIKRIENTTNRQVTFCKRRNGLLKKAYELSVLCDAEVALIVFSSRGRVYEYSNNNIKSTIDRYKKASSDSTNGGSTMEINAQYYQQESAKLRQQIQMLQNSNRHLMGDSLASLTVKELKQLENRLERGITRIRSKKHELLLAEIEYLQKREIELENESVYLRTKIAEVERLQQANMVSTHEFNAIQALVSLNFFQPNMIEGGSAGYPLPDKKVLHLG.

The region spanning 1 to 61 (MGRGKIEIKR…GRVYEYSNNN (61 aa)) is the MADS-box domain. A K-box domain is found at 87–177 (AQYYQQESAK…RTKIAEVERL (91 aa)).

The protein localises to the nucleus. Probable transcription factor involved in seed development. The sequence is that of Agamous-like MADS-box protein AGL11 from Vitis vinifera (Grape).